Reading from the N-terminus, the 335-residue chain is POU domain, class 5, transcription factor 2 (335 aa).

The segment at 1 to 23 (MAGRRSSNVCPFPGNSGGGLEGP) is disordered. In terms of domain architecture, POU-specific spans 113–187 (DVSAIQKEME…LLKMWLEEVD (75 aa)). Residues 205 to 264 (RKRRRASRERRIGSNLEKLFLQCPEPTPQQISYIAGRLRLQKDLVQVWFSNRSQMAGWPT) constitute a DNA-binding region (homeobox).

This sequence belongs to the POU transcription factor family. Class-5 subfamily. Highly restricted to adult testis.

Its subcellular location is the nucleus. In terms of biological role, transcription factor that binds preferentially to the octamer motif (5'-ATGTTAAT-3'). May exert a regulatory function in meiotic events that are required for terminal differentiation of male germ cell. The sequence is that of POU domain, class 5, transcription factor 2 (Pou5f2) from Rattus norvegicus (Rat).